We begin with the raw amino-acid sequence, 824 residues long: Neuronal PAS domain-containing protein 2 (824 aa).

Residues 1-10 (MDEDEKDRAK) show a composition bias toward basic and acidic residues. The tract at residues 1–21 (MDEDEKDRAKRASRNKSEKKR) is disordered. A sufficient for heterodimer formation with BMAL1, E-box binding and for the effect of NADPH region spans residues 1 to 61 (MDEDEKDRAK…VIGFLQKHNE (61 aa)). The 51-residue stretch at 9-59 (AKRASRNKSEKKRRDQFNVLIKELSSMLPGNTRKMDKTTVLEKVIGFLQKH) folds into the bHLH domain. In terms of domain architecture, PAS 1 spans 82 to 152 (NEEFTQLMLE…KILSSHMLVT (71 aa)). Heme b contacts are provided by His-119 and His-171. The PAS 2 domain occupies 237–307 (FLKEMCIVDE…RCHQHLMQFG (71 aa)). The PAC domain occupies 311 to 354 (SCCYRFLTKGQQWIWLQTHYYITYHQWNSKPEFIVCTHSVVSYA). Disordered stretches follow at residues 367-437 (EDPP…MAEA), 556-667 (SSTQ…PDFS), 681-704 (QPMM…RQVK), and 739-824 (PSFP…QPPR). Over residues 378–390 (ALKDKGSSLEPRQ) the composition is skewed to basic and acidic residues. Residues 421–431 (TAMSEPTSTPT) are compositionally biased toward polar residues. Residues 559-576 (QRPEAQQQLQQRSAAVTQ) are compositionally biased toward low complexity. Residues 587–610 (GQISSAQVTSQHLLRESSVISTQG) show a composition bias toward polar residues. Residues 614 to 636 (MRSSQLMQSSGRSGSSLVSPFSS) show a composition bias toward low complexity. 2 stretches are compositionally biased toward polar residues: residues 645 to 664 (LNLT…QPSP) and 694 to 704 (SEVSRTGRQVK). Positions 739-760 (PSFPASQPSPLQPAQARQQPPQ) are enriched in low complexity. A compositionally biased stretch (polar residues) spans 766-789 (QAPTSLHSEQQDSLLLSTYSQQPG). The segment covering 794–805 (PQPPPAQPQPLR) has biased composition (pro residues). The segment covering 809-824 (RVSSLSESSGLQQPPR) has biased composition (low complexity).

As to quaternary structure, component of the circadian clock oscillator which includes the CRY proteins, CLOCK or NPAS2, BMAL1 or BMAL2, CSNK1D and/or CSNK1E, TIMELESS and the PER proteins. Efficient DNA binding requires dimerization with another bHLH protein. Forms a heterodimer with BMAL1 and this heterodimerization is required for E-box-dependent transactivation. Interacts with NCOA3, KAT2B, CREBBP and EP300. It depends on heme as a cofactor.

It is found in the nucleus. Carbon monoxide (CO) and the redox state of the cell can modulate the transcriptional activity of the NPAS2-BMAL1 heterodimer. NADH and NADPH enhance the DNA-binding activity of the heterodimer whereas CO binds the heme group in NPAS2 and inhibits the DNA-binding activity of the heterodimer. Transcriptional activator which forms a core component of the circadian clock. The circadian clock, an internal time-keeping system, regulates various physiological processes through the generation of approximately 24 hour circadian rhythms in gene expression, which are translated into rhythms in metabolism and behavior. It is derived from the Latin roots 'circa' (about) and 'diem' (day) and acts as an important regulator of a wide array of physiological functions including metabolism, sleep, body temperature, blood pressure, endocrine, immune, cardiovascular, and renal function. Consists of two major components: the central clock, residing in the suprachiasmatic nucleus (SCN) of the brain, and the peripheral clocks that are present in nearly every tissue and organ system. Both the central and peripheral clocks can be reset by environmental cues, also known as Zeitgebers (German for 'timegivers'). The predominant Zeitgeber for the central clock is light, which is sensed by retina and signals directly to the SCN. The central clock entrains the peripheral clocks through neuronal and hormonal signals, body temperature and feeding-related cues, aligning all clocks with the external light/dark cycle. Circadian rhythms allow an organism to achieve temporal homeostasis with its environment at the molecular level by regulating gene expression to create a peak of protein expression once every 24 hours to control when a particular physiological process is most active with respect to the solar day. Transcription and translation of core clock components (CLOCK, NPAS2, BMAL1, BMAL2, PER1, PER2, PER3, CRY1 and CRY2) plays a critical role in rhythm generation, whereas delays imposed by post-translational modifications (PTMs) are important for determining the period (tau) of the rhythms (tau refers to the period of a rhythm and is the length, in time, of one complete cycle). A diurnal rhythm is synchronized with the day/night cycle, while the ultradian and infradian rhythms have a period shorter and longer than 24 hours, respectively. Disruptions in the circadian rhythms contribute to the pathology of cardiovascular diseases, cancer, metabolic syndromes and aging. A transcription/translation feedback loop (TTFL) forms the core of the molecular circadian clock mechanism. Transcription factors, CLOCK or NPAS2 and BMAL1 or BMAL2, form the positive limb of the feedback loop, act in the form of a heterodimer and activate the transcription of core clock genes and clock-controlled genes (involved in key metabolic processes), harboring E-box elements (5'-CACGTG-3') within their promoters. The core clock genes: PER1/2/3 and CRY1/2 which are transcriptional repressors form the negative limb of the feedback loop and interact with the CLOCK|NPAS2-BMAL1|BMAL2 heterodimer inhibiting its activity and thereby negatively regulating their own expression. This heterodimer also activates nuclear receptors NR1D1/2 and RORA/B/G, which form a second feedback loop and which activate and repress BMAL1 transcription, respectively. The NPAS2-BMAL1 heterodimer positively regulates the expression of MAOA, F7 and LDHA and modulates the circadian rhythm of daytime contrast sensitivity by regulating the rhythmic expression of adenylate cyclase type 1 (ADCY1) in the retina. NPAS2 plays an important role in sleep homeostasis and in maintaining circadian behaviors in normal light/dark and feeding conditions and in the effective synchronization of feeding behavior with scheduled food availability. Regulates the gene transcription of key metabolic pathways in the liver and is involved in DNA damage response by regulating several cell cycle and DNA repair genes. Controls the circadian rhythm of NR0B2 expression by binding rhythmically to its promoter. Mediates the diurnal variation in the expression of GABARA1 receptor in the brain and contributes to the regulation of anxiety-like behaviors and GABAergic neurotransmission in the ventral striatum. The polypeptide is Neuronal PAS domain-containing protein 2 (NPAS2) (Homo sapiens (Human)).